A 312-amino-acid polypeptide reads, in one-letter code: Glutaminase (312 aa).

Substrate-binding residues include S67, N118, E162, N169, Y193, Y245, and V263.

The protein belongs to the glutaminase family. As to quaternary structure, homotetramer.

It carries out the reaction L-glutamine + H2O = L-glutamate + NH4(+). This is Glutaminase from Bordetella avium (strain 197N).